The following is a 693-amino-acid chain: DNA ligase (693 aa).

Residues Asp35 to Asp39, Ser84 to Ile85, and Glu121 contribute to the NAD(+) site. Catalysis depends on Lys123, which acts as the N6-AMP-lysine intermediate. NAD(+) is bound by residues Arg144, Glu180, Lys297, and Lys321. 4 residues coordinate Zn(2+): Cys418, Cys421, Cys436, and Cys442. The BRCT domain occupies Pro601–Gly690.

This sequence belongs to the NAD-dependent DNA ligase family. LigA subfamily. Requires Mg(2+) as cofactor. Mn(2+) serves as cofactor.

The enzyme catalyses NAD(+) + (deoxyribonucleotide)n-3'-hydroxyl + 5'-phospho-(deoxyribonucleotide)m = (deoxyribonucleotide)n+m + AMP + beta-nicotinamide D-nucleotide.. In terms of biological role, DNA ligase that catalyzes the formation of phosphodiester linkages between 5'-phosphoryl and 3'-hydroxyl groups in double-stranded DNA using NAD as a coenzyme and as the energy source for the reaction. It is essential for DNA replication and repair of damaged DNA. The polypeptide is DNA ligase (Azoarcus sp. (strain BH72)).